Here is a 465-residue protein sequence, read N- to C-terminus: Transcriptional protein swt1 (465 aa).

The PINc domain maps to 70 to 190 (GLFVLDTNFL…LLSDDKNLSI (121 aa)).

This sequence belongs to the SWT1 family.

It localises to the cytoplasm. The protein resides in the nucleus. Functionally, involved in transcription. In Schizosaccharomyces pombe (strain 972 / ATCC 24843) (Fission yeast), this protein is Transcriptional protein swt1.